The following is a 226-amino-acid chain: V-type proton ATPase subunit E 1 (226 aa).

Ala2 carries the N-acetylalanine modification. Residue Tyr56 is modified to Phosphotyrosine.

Belongs to the V-ATPase E subunit family. In terms of assembly, V-ATPase is a heteromultimeric enzyme made up of two complexes: the ATP-hydrolytic V1 complex and the proton translocation V0 complex. The V1 complex consists of three catalytic AB heterodimers that form a heterohexamer, three peripheral stalks each consisting of EG heterodimers, one central rotor including subunits D and F, and the regulatory subunits C and H. The proton translocation complex V0 consists of the proton transport subunit a, a ring of proteolipid subunits c9c'', rotary subunit d, subunits e and f, and the accessory subunits ATP6AP1/Ac45 and ATP6AP2/PRR. Interacts with RABL2/RABL2A; binds preferentially to GTP-bound RABL2. Interacts with ALDOC. Interacts with RAB11B. In terms of tissue distribution, expressed within the midpiece of sperm tail (at protein level). Kidney; localizes to early distal nephron, encompassing thick ascending limbs and distal convoluted tubules (at protein level).

It is found in the apical cell membrane. The protein resides in the cytoplasmic vesicle. It localises to the secretory vesicle. Its subcellular location is the synaptic vesicle membrane. The protein localises to the clathrin-coated vesicle membrane. Subunit of the V1 complex of vacuolar(H+)-ATPase (V-ATPase), a multisubunit enzyme composed of a peripheral complex (V1) that hydrolyzes ATP and a membrane integral complex (V0) that translocates protons. V-ATPase is responsible for acidifying and maintaining the pH of intracellular compartments and in some cell types, is targeted to the plasma membrane, where it is responsible for acidifying the extracellular environment. This is V-type proton ATPase subunit E 1 (Atp6v1e1) from Mus musculus (Mouse).